A 372-amino-acid polypeptide reads, in one-letter code: Protein REVEILLE 7 (372 aa).

In terms of domain architecture, HTH myb-type spans 71 to 125 (TVTKQREKWSEEEHDRFLEAIKLYGRGWRQIQEHIGTKTAVQIRSHAQKFFSKMA). The segment at residues 98 to 121 (WRQIQEHIGTKTAVQIRSHAQKFF) is a DNA-binding region (H-T-H motif). Residues 124-204 (MAQEADSRSE…RCSSPNSCTS (81 aa)) are disordered. Positions 145–155 (RPKRKPAHPYP) are enriched in basic residues. Residues 156–169 (RKSPVPYTQSPPPN) are compositionally biased toward pro residues. Positions 178–204 (KSPTSVLSSFGSEDQVNRCSSPNSCTS) are enriched in polar residues.

The protein resides in the nucleus. Its function is as follows. Transcription factor involved in phytochrome A-mediated cotyledon opening. Controlled by the central oscillator mediated by LHY and CCA1. Part of a regulatory circadian feedback loop. Regulates its own expression. This is Protein REVEILLE 7 (RVE7) from Arabidopsis thaliana (Mouse-ear cress).